Reading from the N-terminus, the 409-residue chain is LL-diaminopimelate aminotransferase (409 aa).

2 residues coordinate substrate: tyrosine 15 and glycine 42. Residues tyrosine 72, 108 to 109 (SK), tyrosine 132, asparagine 187, tyrosine 218, and 246 to 248 (SFS) contribute to the pyridoxal 5'-phosphate site. The substrate site is built by lysine 109, tyrosine 132, and asparagine 187. Lysine 249 is subject to N6-(pyridoxal phosphate)lysine. Pyridoxal 5'-phosphate is bound by residues arginine 257 and asparagine 292. Positions 292 and 388 each coordinate substrate.

It belongs to the class-I pyridoxal-phosphate-dependent aminotransferase family. LL-diaminopimelate aminotransferase subfamily. Homodimer. Pyridoxal 5'-phosphate is required as a cofactor.

It carries out the reaction (2S,6S)-2,6-diaminopimelate + 2-oxoglutarate = (S)-2,3,4,5-tetrahydrodipicolinate + L-glutamate + H2O + H(+). The protein operates within amino-acid biosynthesis; L-lysine biosynthesis via DAP pathway; LL-2,6-diaminopimelate from (S)-tetrahydrodipicolinate (aminotransferase route): step 1/1. Functionally, involved in the synthesis of meso-diaminopimelate (m-DAP or DL-DAP), required for both lysine and peptidoglycan biosynthesis. Catalyzes the direct conversion of tetrahydrodipicolinate to LL-diaminopimelate. The protein is LL-diaminopimelate aminotransferase of Heliobacterium modesticaldum (strain ATCC 51547 / Ice1).